The following is a 105-amino-acid chain: uncharacterized protein (105 aa).

This is an uncharacterized protein from Schizosaccharomyces pombe (strain 972 / ATCC 24843) (Fission yeast).